Reading from the N-terminus, the 544-residue chain is CTP synthase (544 aa).

Residues 1–265 (MTQYIFITGG…DDLVVKHFGL (265 aa)) are amidoligase domain. CTP is bound at residue Ser-13. Ser-13 contacts UTP. Residues 14-19 (SLGKGI) and Asp-71 contribute to the ATP site. Mg(2+)-binding residues include Asp-71 and Glu-139. CTP is bound by residues 146–148 (DIE), 186–191 (KTKPTQ), and Lys-222. UTP contacts are provided by residues 186-191 (KTKPTQ) and Lys-222. Residues 290–541 (TVAMVGKYVN…IAAALDYQTE (252 aa)) enclose the Glutamine amidotransferase type-1 domain. Gly-351 provides a ligand contact to L-glutamine. Cys-378 (nucleophile; for glutamine hydrolysis) is an active-site residue. L-glutamine-binding positions include 379–382 (LGLQ), Glu-402, and Arg-469. Active-site residues include His-514 and Glu-516.

Belongs to the CTP synthase family. In terms of assembly, homotetramer.

It catalyses the reaction UTP + L-glutamine + ATP + H2O = CTP + L-glutamate + ADP + phosphate + 2 H(+). The enzyme catalyses L-glutamine + H2O = L-glutamate + NH4(+). It carries out the reaction UTP + NH4(+) + ATP = CTP + ADP + phosphate + 2 H(+). The protein operates within pyrimidine metabolism; CTP biosynthesis via de novo pathway; CTP from UDP: step 2/2. With respect to regulation, allosterically activated by GTP, when glutamine is the substrate; GTP has no effect on the reaction when ammonia is the substrate. The allosteric effector GTP functions by stabilizing the protein conformation that binds the tetrahedral intermediate(s) formed during glutamine hydrolysis. Inhibited by the product CTP, via allosteric rather than competitive inhibition. In terms of biological role, catalyzes the ATP-dependent amination of UTP to CTP with either L-glutamine or ammonia as the source of nitrogen. Regulates intracellular CTP levels through interactions with the four ribonucleotide triphosphates. The protein is CTP synthase of Dichelobacter nodosus (strain VCS1703A).